The following is a 694-amino-acid chain: Polynucleotide 3'-phosphatase ZDP (694 aa).

PARP-type zinc fingers lie at residues 50-132 (VVAE…EQCG) and 165-247 (VIAD…EVNK). Zn(2+) is bound by residues cysteine 62, cysteine 65, histidine 93, cysteine 96, cysteine 177, cysteine 180, histidine 208, and cysteine 211. The disordered stretch occupies residues 266–331 (AIADNELTEE…SPDSSKVISE (66 aa)). Residues 302–321 (ESKKPASDEISEQKTKDVKN) show a composition bias toward basic and acidic residues. Residues 322 to 331 (SPDSSKVISE) show a composition bias toward polar residues. The PARP-type 3 zinc-finger motif lies at 328–410 (VISEYAKSSR…ALKELVQQCG (83 aa)). Residues cysteine 340, cysteine 343, histidine 371, and cysteine 374 each contribute to the Zn(2+) site.

This sequence in the C-terminal section; belongs to the DNA 3' phosphatase family. Interacts with ROS1 (via the central region). Binds to XRCC1.

Its subcellular location is the nucleus. The protein localises to the nucleoplasm. The enzyme catalyses a 3'end (2'-deoxyribonucleotide 3'-phosphate)-DNA + H2O = a 3'-end 2'-deoxyribonucleotide-DNA + phosphate. Its activity is regulated as follows. Activated by the presence of DNA. Stimulated by XRCC1. Functionally, nick-sensing 3'-phosphoesterase involved in a base excision repair pathway required for active DNA demethylation. The N-terminal DNA-binding domain binds specifically to gap sites and sharply bends the target DNA. Lacks 5'-kinase activity but is capable of 3'-phosphoglycolate end processing. Inactive on 3'-alpha,beta-unsaturated aldehyde (3'-dRP). Protects partially genes from transcriptional silencing by preventing promoter DNA hypermethylation. The protein is Polynucleotide 3'-phosphatase ZDP (ZDP) of Arabidopsis thaliana (Mouse-ear cress).